The following is a 286-amino-acid chain: MSSPSFINKLALPNLATITQYPALTVGLSVFTFLLLVIDLCSNQALSQKFSLYPNAPFEFDLNRLSFYLLFHRGFTHWLLNVVGLFSPLAIFERTNGTVFTGVTLNVLAVTAGLQFCIVGKLLYPNTQVIGLSGVVFSFMSFMAYKEHHTTPVIYTFKYQGSEVSIPTLYSPFIFLIVCMVLIPGSSFWGHLAGISSGYLLALGYIKFLYPPSKAILFIERKLQTPINALRSLVVYYKEEEAIEQRGVSYNPLLSSDPESALNDIPVTTGARTNSFAGEGQVLGAT.

The next 6 helical transmembrane spans lie at 18-38, 66-86, 99-119, 122-142, 164-183, and 188-210; these read ITQY…LLVI, SFYL…VGLF, VFTG…FCIV, LLYP…FMSF, VSIP…MVLI, and FWGH…KFLY. The active-site Nucleophile is Ser133. His191 is a catalytic residue.

Belongs to the peptidase S54 family.

The protein localises to the golgi apparatus membrane. It is found in the golgi apparatus. The protein resides in the cis-Golgi network membrane. The catalysed reaction is Cleaves type-1 transmembrane domains using a catalytic dyad composed of serine and histidine that are contributed by different transmembrane domains.. Its function is as follows. Probable rhomboid-type serine protease that catalyzes intramembrane proteolysis. This is Rhomboid-type serine protease 2 (RBD2) from Debaryomyces hansenii (strain ATCC 36239 / CBS 767 / BCRC 21394 / JCM 1990 / NBRC 0083 / IGC 2968) (Yeast).